The chain runs to 666 residues: Calpain-10 (666 aa).

The Calpain catalytic domain occupies 13–321 (LFRDAAFPAS…FDEVTIGYPV (309 aa)). Catalysis depends on residues Cys73, His238, and Asn263. 2 domain III regions span residues 322–488 (TEAG…ISLS) and 507–648 (EWET…IHSQ).

The protein belongs to the peptidase C2 family. Ubiquitous.

The protein resides in the cytoplasm. It localises to the nucleus. Functionally, calcium-regulated non-lysosomal thiol-protease which catalyzes limited proteolysis of substrates involved in cytoskeletal remodeling and signal transduction. May play a role in insulin-stimulated glucose uptake. This Rattus norvegicus (Rat) protein is Calpain-10 (Capn10).